We begin with the raw amino-acid sequence, 223 residues long: ATP synthase subunit a 1 (223 aa).

5 consecutive transmembrane segments (helical) span residues 20-40 (QTIVMTWVIMVFLAGGSAFLT), 78-98 (YLSYLATLFLFVATAVLFTII), 107-127 (SLSTTAALALSVFVAVPLYGI), 173-193 (VMIIGILLGIAPLFFPVLMSV), and 194-214 (LGLLTGMVQAYIFSMLATVYI).

The protein belongs to the ATPase A chain family. As to quaternary structure, F-type ATPases have 2 components, CF(1) - the catalytic core - and CF(0) - the membrane proton channel. CF(1) has five subunits: alpha(3), beta(3), gamma(1), delta(1), epsilon(1). CF(0) has four main subunits: a, b, b' and c.

Its subcellular location is the cell inner membrane. Key component of the proton channel; it plays a direct role in the translocation of protons across the membrane. The protein is ATP synthase subunit a 1 of Prosthecochloris aestuarii (strain DSM 271 / SK 413).